We begin with the raw amino-acid sequence, 388 residues long: Transposase for insertion sequence element IS406 (388 aa).

The protein belongs to the transposase mutator family.

In terms of biological role, required for the transposition of the insertion element. The sequence is that of Transposase for insertion sequence element IS406 from Burkholderia multivorans (strain ATCC 17616 / 249).